A 534-amino-acid chain; its full sequence is Arginine transporter 1 (534 aa).

6 consecutive transmembrane segments (helical) span residues 35–55, 99–119, 126–146, 154–174, 182–202, and 216–236; these read YVLLVIYMIYALLTSSVYFGW, SLFTIAMACHFTCSAVAGYLL, AVALLGQTFNALAWILLAFSG, PAFVFMGAGADVSVYPTLLIV, ALIMATLGACISLSFFVPLVL, and VCIGYAVAGPILCAVVAFFFI. Asparagine 246 is a glycosylation site (N-linked (GlcNAc...) asparagine). The disordered stretch occupies residues 261-302; sequence TAQSSPKAVDSPPCDEGASSRGRLAVSHNTERTAPDDEQEKD. A compositionally biased stretch (basic and acidic residues) spans 289-302; that stretch reads NTERTAPDDEQEKD. 6 helical membrane passes run 329 to 349, 365 to 385, 388 to 408, 419 to 439, 451 to 471, and 483 to 503; these read AFTFLYFGICLYFTVCGWVMA, YTLEILTPLSTIPCLLFGVVI, IGIMPVILMLNTIGLLTYVCV, FSVIFFFMYISIFTTQMYVFV, LIGVASLIGGLLSLISNVLYG, and RPVVIALLAVIILMYPILLAM.

The protein belongs to the SLC43A transporter (TC 2.A.1.44) family.

The protein resides in the cell membrane. It catalyses the reaction L-arginine(in) = L-arginine(out). Selective L-arginine transporter that is essential for parasite survival and virulence. Does not require other inorganic ions such as sodium, chloride, potassium or calcium. The polypeptide is Arginine transporter 1 (Toxoplasma gondii (strain ATCC 50611 / Me49)).